The primary structure comprises 260 residues: MFISSGDAVPSFKGFTLILPAVSVGNVGQLAVDLLISTLNMPRVGYFHTDCLIPMAGNNPYASSTEDAAQLSTSAEVYSHRDLKLAVLQIRAPIIQTKVKSFRKLMISWMKSSGFLRTVLLSSAHAYQRDDQQLHGTPLRYMLSPSLEKEERQRFEELGWREMEKISVFPGISDSEQRLYIPGGGVTKCLYTDCCTEDVPMAVVLIFCSEGDNIPDAFALINCLNDWLHLLEKPTQGSVQWRVPPSWKLLFGSGIPPLLF.

This sequence belongs to the PSMG2 family. Forms a heterodimer with psmg1. In terms of processing, degraded by the proteasome upon completion of 20S proteasome maturation.

Its subcellular location is the nucleus. Functionally, chaperone protein which promotes assembly of the 20S proteasome as part of a heterodimer with psmg1. The sequence is that of Proteasome assembly chaperone 2 from Danio rerio (Zebrafish).